Here is a 513-residue protein sequence, read N- to C-terminus: Activin receptor type-2A (513 aa).

A signal peptide spans 1–19 (MGAAAKLAFAVFLISCSSG). Residues 20 to 135 (AILGRSETQE…TSNPVTPKPP (116 aa)) are Extracellular-facing. Cystine bridges form between Cys-30-Cys-60, Cys-50-Cys-78, Cys-85-Cys-104, Cys-91-Cys-103, and Cys-105-Cys-110. N-linked (GlcNAc...) asparagine glycans are attached at residues Asn-43 and Asn-66. A helical membrane pass occupies residues 136-161 (YYNILLYSLVPLMLIAGIVICAFWVY). The Cytoplasmic portion of the chain corresponds to 162 to 513 (RHHKMAYPPV…VDFPPKESSL (352 aa)). A Protein kinase domain is found at 192-485 (LQLLEVKARG…GERITQMQRL (294 aa)). ATP is bound by residues 198-206 (KARGRFGCV) and Lys-219. The active-site Proton acceptor is Asp-322.

This sequence belongs to the protein kinase superfamily. TKL Ser/Thr protein kinase family. TGFB receptor subfamily. As to quaternary structure, part of a complex consisting of MAGI2/ARIP1, ACVR2A, ACVR1B and SMAD3. Interacts with MAGI2/ARIP1. Interacts with type I receptor ACVR1. Interacts with BMP7. Interacts with TSC22D1/TSC-22. Interacts with activin A/INHBA. Mg(2+) serves as cofactor. It depends on Mn(2+) as a cofactor.

It localises to the cell membrane. It carries out the reaction L-threonyl-[receptor-protein] + ATP = O-phospho-L-threonyl-[receptor-protein] + ADP + H(+). It catalyses the reaction L-seryl-[receptor-protein] + ATP = O-phospho-L-seryl-[receptor-protein] + ADP + H(+). Functionally, on ligand binding, forms a receptor complex consisting of two type II and two type I transmembrane serine/threonine kinases. Type II receptors phosphorylate and activate type I receptors which autophosphorylate, then bind and activate SMAD transcriptional regulators. Receptor for activin A, activin B and inhibin A. Mediates induction of adipogenesis by GDF6. In Homo sapiens (Human), this protein is Activin receptor type-2A.